Reading from the N-terminus, the 387-residue chain is Penicillopepsin-1 (387 aa).

The N-terminal stretch at methionine 1–alanine 19 is a signal peptide. Residues alanine 20–alanine 66 constitute a propeptide, activation peptide. The region spanning tyrosine 85–alanine 384 is the Peptidase A1 domain. Active-site residues include aspartate 101 and aspartate 279. Residue asparagine 304 is glycosylated (N-linked (GlcNAc...) asparagine). Cysteine 315 and cysteine 347 are joined by a disulfide.

This sequence belongs to the peptidase A1 family. In terms of assembly, monomer.

It is found in the secreted. It catalyses the reaction Hydrolysis of proteins with broad specificity similar to that of pepsin A, preferring hydrophobic residues at P1 and P1', but also cleaving 20-Gly-|-Glu-21 in the B chain of insulin. Clots milk, and activates trypsinogen.. Its function is as follows. Secreted aspartic endopeptidase that allows assimilation of proteinaceous substrates. The scissile peptide bond is attacked by a nucleophilic water molecule activated by two aspartic residues in the active site. Shows a broad primary substrate specificity. Favors hydrophobic residues at the P1 and P1' positions, but can also activate trypsinogen and hydrolyze the B chain of insulin between positions 'Gly-20' and 'Glu-21'. In Talaromyces stipitatus (strain ATCC 10500 / CBS 375.48 / QM 6759 / NRRL 1006) (Penicillium stipitatum), this protein is Penicillopepsin-1 (pepA).